Reading from the N-terminus, the 505-residue chain is Maturase K (505 aa).

This sequence belongs to the intron maturase 2 family. MatK subfamily.

Its subcellular location is the plastid. It localises to the chloroplast. Usually encoded in the trnK tRNA gene intron. Probably assists in splicing its own and other chloroplast group II introns. This Coffea arabica (Arabian coffee) protein is Maturase K.